Reading from the N-terminus, the 323-residue chain is Fructose-1,6-bisphosphatase class 1 (323 aa).

The Mg(2+) site is built by glutamate 88, aspartate 107, leucine 109, and aspartate 110. Substrate-binding positions include 110-113 (DGSS) and asparagine 200. Glutamate 272 is a Mg(2+) binding site.

It belongs to the FBPase class 1 family. Homotetramer. Mg(2+) is required as a cofactor.

The protein localises to the cytoplasm. It carries out the reaction beta-D-fructose 1,6-bisphosphate + H2O = beta-D-fructose 6-phosphate + phosphate. It participates in carbohydrate biosynthesis; gluconeogenesis. The polypeptide is Fructose-1,6-bisphosphatase class 1 (Acinetobacter baylyi (strain ATCC 33305 / BD413 / ADP1)).